Here is a 378-residue protein sequence, read N- to C-terminus: Lactosylceramide 1,3-N-acetyl-beta-D-glucosaminyltransferase (378 aa).

Residues 1–14 lie on the Cytoplasmic side of the membrane; the sequence is MRMLVSGRRVKKWQ. Residues 15–35 traverse the membrane as a helical; Signal-anchor for type II membrane protein segment; it reads LIIQLFATCFLASLMFFWEPI. Residues 36–378 are Lumenal-facing; that stretch reads DNHIVSHMKS…DTYPCRAAFI (343 aa). Asparagine 59 carries N-linked (GlcNAc...) asparagine glycosylation.

It belongs to the glycosyltransferase 31 family. As to expression, widely expressed. Highly expressed in lung, colon, placenta, testis, pituitary gland and cerebellum. Weakly expressed in brain, liver, spleen, lymph node and thymus.

Its subcellular location is the golgi apparatus membrane. It catalyses the reaction a beta-D-Gal-(1-&gt;4)-beta-D-Glc-(1&lt;-&gt;1)-Cer(d18:1(4E)) + UDP-N-acetyl-alpha-D-glucosamine = a beta-D-GlcNAc-(1-&gt;3)-beta-D-Gal-(1-&gt;4)-beta-D-Glc-(1&lt;-&gt;1)-Cer(d18:1(4E)) + UDP + H(+). It carries out the reaction a neolactoside nLc4Cer(d18:1(4E)) + UDP-N-acetyl-alpha-D-glucosamine = a neolactoside IV(3)-beta-GlcNAc-nLc4Cer(d18:1(4E)) + UDP + H(+). It functions in the pathway protein modification; protein glycosylation. Functionally, beta-1,3-N-acetylglucosaminyltransferase that plays a key role in the synthesis of lacto- or neolacto-series carbohydrate chains on glycolipids, notably by participating in biosynthesis of HNK-1 and Lewis X carbohydrate structures. Has strong activity toward lactosylceramide (LacCer) and neolactotetraosylceramide (nLc(4)Cer; paragloboside), resulting in the synthesis of Lc(3)Cer and neolactopentaosylceramide (nLc(5)Cer), respectively. Probably plays a central role in regulating neolacto-series glycolipid synthesis during embryonic development. This chain is Lactosylceramide 1,3-N-acetyl-beta-D-glucosaminyltransferase, found in Homo sapiens (Human).